A 461-amino-acid chain; its full sequence is UPF0210 protein LCABL_10110 (461 aa).

This sequence belongs to the UPF0210 family. In terms of assembly, homodimer.

This is UPF0210 protein LCABL_10110 from Lacticaseibacillus casei (strain BL23) (Lactobacillus casei).